The chain runs to 161 residues: Phosphopantetheine adenylyltransferase (161 aa).

Substrate is bound at residue T10. ATP-binding positions include 10–11 (TF) and H18. Substrate is bound by residues K42, L75, and R89. Residues 90–92 (GLR), E100, and 125–131 (YSFLSSS) each bind ATP.

This sequence belongs to the bacterial CoaD family. As to quaternary structure, homohexamer. It depends on Mg(2+) as a cofactor.

It localises to the cytoplasm. It carries out the reaction (R)-4'-phosphopantetheine + ATP + H(+) = 3'-dephospho-CoA + diphosphate. The protein operates within cofactor biosynthesis; coenzyme A biosynthesis; CoA from (R)-pantothenate: step 4/5. Reversibly transfers an adenylyl group from ATP to 4'-phosphopantetheine, yielding dephospho-CoA (dPCoA) and pyrophosphate. The chain is Phosphopantetheine adenylyltransferase from Thermodesulfovibrio yellowstonii (strain ATCC 51303 / DSM 11347 / YP87).